The following is a 95-amino-acid chain: Co-chaperonin GroES (95 aa).

The protein belongs to the GroES chaperonin family. In terms of assembly, heptamer of 7 subunits arranged in a ring. Interacts with the chaperonin GroEL.

The protein resides in the cytoplasm. Functionally, together with the chaperonin GroEL, plays an essential role in assisting protein folding. The GroEL-GroES system forms a nano-cage that allows encapsulation of the non-native substrate proteins and provides a physical environment optimized to promote and accelerate protein folding. GroES binds to the apical surface of the GroEL ring, thereby capping the opening of the GroEL channel. This chain is Co-chaperonin GroES, found in Aliivibrio salmonicida (strain LFI1238) (Vibrio salmonicida (strain LFI1238)).